A 363-amino-acid polypeptide reads, in one-letter code: UV excision repair protein RAD23 homolog A (363 aa).

In terms of domain architecture, Ubiquitin-like spans 1-81 (MAVTITLKTL…VVVMVTKTKA (81 aa)). A disordered region spans residues 81 to 160 (AGQGTSAPPE…EDAASTLVTG (80 aa)). Positions 85–103 (TSAPPEASPTAAPESSTSF) are enriched in low complexity. Residue K122 forms a Glycyl lysine isopeptide (Lys-Gly) (interchain with G-Cter in ubiquitin) linkage. A phosphoserine mark is found at S123, S128, S133, S136, and S138. Over residues 126–147 (EESAPTTSPESVSGSVPSSGSS) the composition is skewed to low complexity. In terms of domain architecture, UBA 1 spans 161-201 (SEYETMLTEIMSMGYERERVVAALRASYNNPHRAVEYLLTG). Residues 203-227 (PGSPEPEHGSVQESQVSEQPATEAA) form a disordered region. S205 carries the post-translational modification Phosphoserine. The segment covering 213–222 (VQESQVSEQP) has biased composition (polar residues). A phosphoserine mark is found at S295 and S357. In terms of domain architecture, UBA 2 spans 318 to 358 (PQEKEAIERLKALGFPESLVIQAYFACEKNENLAANFLLSQ). The tract at residues 319–363 (QEKEAIERLKALGFPESLVIQAYFACEKNENLAANFLLSQNFDDE) is HIV-1 vpr binding.

This sequence belongs to the RAD23 family. Interacts with XPC; the interaction is suggesting the existence of a functional equivalent variant XPC complex. Interacts with PSMD4 and PSMC5. Interacts with ATXN3. Interacts with UBQLN2. As to quaternary structure, (Microbial infection) Interacts with HIV-1 Vpr.

It is found in the nucleus. Its function is as follows. Multiubiquitin chain receptor involved in modulation of proteasomal degradation. Binds to 'Lys-48'-linked polyubiquitin chains in a length-dependent manner and with a lower affinity to 'Lys-63'-linked polyubiquitin chains. Proposed to be capable to bind simultaneously to the 26S proteasome and to polyubiquitinated substrates and to deliver ubiquitinated proteins to the proteasome. Functionally, involved in nucleotide excision repair and is thought to be functional equivalent for RAD23B in global genome nucleotide excision repair (GG-NER) by association with XPC. In vitro, the XPC:RAD23A dimer has NER activity. Can stabilize XPC. (Microbial infection) Involved in Vpr-dependent replication of HIV-1 in non-proliferating cells and primary macrophages. Required for the association of HIV-1 Vpr with the host proteasome. The polypeptide is UV excision repair protein RAD23 homolog A (RAD23A) (Homo sapiens (Human)).